Consider the following 127-residue polypeptide: Large ribosomal subunit protein bL17 (127 aa).

It belongs to the bacterial ribosomal protein bL17 family. In terms of assembly, part of the 50S ribosomal subunit. Contacts protein L32.

This Legionella pneumophila (strain Lens) protein is Large ribosomal subunit protein bL17.